The sequence spans 446 residues: Eukaryotic translation initiation factor 3 subunit E (446 aa).

The region spanning 240–420 (PLFNDENSRE…GTVVMNHPNS (181 aa)) is the PCI domain.

It belongs to the eIF-3 subunit E family. In terms of assembly, component of the eukaryotic translation initiation factor 3 (eIF-3) complex.

Its subcellular location is the cytoplasm. In terms of biological role, component of the eukaryotic translation initiation factor 3 (eIF-3) complex, which is involved in protein synthesis of a specialized repertoire of mRNAs and, together with other initiation factors, stimulates binding of mRNA and methionyl-tRNAi to the 40S ribosome. The eIF-3 complex specifically targets and initiates translation of a subset of mRNAs involved in cell proliferation. The sequence is that of Eukaryotic translation initiation factor 3 subunit E from Pyricularia oryzae (strain 70-15 / ATCC MYA-4617 / FGSC 8958) (Rice blast fungus).